A 279-amino-acid chain; its full sequence is Ribosomal RNA large subunit methyltransferase E (279 aa).

Positions 1–10 (MSDDDQKPED) are enriched in basic and acidic residues. The segment at 1–66 (MSDDDQKPED…MKKGGDARAA (66 aa)) is disordered. The S-adenosyl-L-methionine site is built by G136, W138, D154, D170, and D194. K234 (proton acceptor) is an active-site residue.

It belongs to the class I-like SAM-binding methyltransferase superfamily. RNA methyltransferase RlmE family.

The protein localises to the cytoplasm. It catalyses the reaction uridine(2552) in 23S rRNA + S-adenosyl-L-methionine = 2'-O-methyluridine(2552) in 23S rRNA + S-adenosyl-L-homocysteine + H(+). In terms of biological role, specifically methylates the uridine in position 2552 of 23S rRNA at the 2'-O position of the ribose in the fully assembled 50S ribosomal subunit. In Maricaulis maris (strain MCS10) (Caulobacter maris), this protein is Ribosomal RNA large subunit methyltransferase E.